We begin with the raw amino-acid sequence, 164 residues long: UPF0304 protein NT01EI_2691 (164 aa).

It belongs to the UPF0304 family.

The chain is UPF0304 protein NT01EI_2691 from Edwardsiella ictaluri (strain 93-146).